A 573-amino-acid chain; its full sequence is Urease subunit alpha 1 (573 aa).

Residues Gly136 to Phe573 form the Urease domain. Ni(2+) contacts are provided by His141, His143, and Lys224. Lys224 is subject to N6-carboxylysine. His226 contacts substrate. His253 and His279 together coordinate Ni(2+). The active-site Proton donor is His327. Ni(2+) is bound at residue Asp367.

This sequence belongs to the metallo-dependent hydrolases superfamily. Urease alpha subunit family. May form a heterohexamer of 3 UreC (alpha) and 3 UreAB (gamma/beta) subunits. May also form a heterotrimer of UreA (gamma), UreB (beta) and UreC (alpha) subunits. Three heterotrimers associate to form the active enzyme. Ni cation is required as a cofactor. Carboxylation allows a single lysine to coordinate two nickel ions.

The protein resides in the cytoplasm. It carries out the reaction urea + 2 H2O + H(+) = hydrogencarbonate + 2 NH4(+). It functions in the pathway nitrogen metabolism; urea degradation; CO(2) and NH(3) from urea (urease route): step 1/1. This chain is Urease subunit alpha 1, found in Streptomyces coelicolor (strain ATCC BAA-471 / A3(2) / M145).